A 306-amino-acid chain; its full sequence is Protein farnesyltransferase/geranylgeranyltransferase type-1 subunit alpha (306 aa).

PFTA repeat units lie at residues Tyr-48 to Asn-82, Asn-84 to Glu-118, Asp-125 to Leu-159, Asn-161 to His-195, and Thr-201 to Arg-235.

The protein belongs to the protein prenyltransferase subunit alpha family. As to quaternary structure, heterodimer of an alpha and a beta subunit. Mg(2+) is required as a cofactor.

The catalysed reaction is L-cysteinyl-[protein] + (2E,6E)-farnesyl diphosphate = S-(2E,6E)-farnesyl-L-cysteinyl-[protein] + diphosphate. The enzyme catalyses geranylgeranyl diphosphate + L-cysteinyl-[protein] = S-geranylgeranyl-L-cysteinyl-[protein] + diphosphate. Its function is as follows. Essential subunit of both the farnesyltransferase and the geranylgeranyltransferase complex. Contributes to the transfer of a farnesyl or geranylgeranyl moiety from farnesyl or geranylgeranyl diphosphate to a cysteine at the fourth position from the C-terminus of several proteins having the C-terminal sequence Cys-aliphatic-aliphatic-X. The sequence is that of Protein farnesyltransferase/geranylgeranyltransferase type-1 subunit alpha (RAM2) from Candida albicans (Yeast).